We begin with the raw amino-acid sequence, 250 residues long: GPI-anchored hemophore PGA10 (250 aa).

The N-terminal stretch at Met-1–Ala-20 is a signal peptide. Residues Asn-26–Ala-137 enclose the CFEM domain. Cystine bridges form between Cys-54-Cys-94, Cys-58-Cys-89, Cys-68-Cys-75, and Cys-77-Cys-110. Asp-72 provides a ligand contact to heme. Positions Ser-165 to Ala-219 are disordered. A compositionally biased stretch (low complexity) spans Ala-178 to Thr-192. A compositionally biased stretch (basic and acidic residues) spans Ser-193–Glu-209. Low complexity predominate over residues Thr-210–Ala-219. Asn-230 is lipidated: GPI-anchor amidated asparagine. The propeptide at Ala-231 to Ile-250 is removed in mature form.

It belongs to the RBT5 family. The GPI-anchor is attached to the protein in the endoplasmic reticulum and serves to target the protein to the cell surface. There, the glucosamine-inositol phospholipid moiety is cleaved off and the GPI-modified mannoprotein is covalently attached via its lipidless GPI glycan remnant to the 1,6-beta-glucan of the outer cell wall layer. Post-translationally, mannosylated.

The protein localises to the secreted. The protein resides in the cell wall. It is found in the cell membrane. In terms of biological role, heme-binding protein involved in heme-iron utilization. The ability to acquire iron from host tissues is a major virulence factor of pathogenic microorganisms. Involved in biofilm formation. The polypeptide is GPI-anchored hemophore PGA10 (Candida albicans (strain SC5314 / ATCC MYA-2876) (Yeast)).